A 367-amino-acid polypeptide reads, in one-letter code: Pectate lyase 1 (367 aa).

The N-terminal stretch at 1–21 is a signal peptide; it reads MASPCLVAVLVFLCAIVSCYS. 2 disulfide bridges follow: cysteine 28–cysteine 45 and cysteine 128–cysteine 147. An N-linked (GlcNAc...) asparagine glycan is attached at asparagine 148. Residue aspartate 170 participates in Ca(2+) binding. Asparagine 178 carries an N-linked (GlcNAc...) asparagine glycan. The Ca(2+) site is built by aspartate 194 and aspartate 198. Arginine 250 is an active-site residue. An N-linked (GlcNAc...) asparagine glycan is attached at asparagine 293. The cysteines at positions 306 and 312 are disulfide-linked.

The protein belongs to the polysaccharide lyase 1 family. Amb a subfamily. Requires Ca(2+) as cofactor.

It catalyses the reaction Eliminative cleavage of (1-&gt;4)-alpha-D-galacturonan to give oligosaccharides with 4-deoxy-alpha-D-galact-4-enuronosyl groups at their non-reducing ends.. The protein operates within glycan metabolism; pectin degradation; 2-dehydro-3-deoxy-D-gluconate from pectin: step 2/5. Its function is as follows. Has pectate lyase activity. This chain is Pectate lyase 1, found in Hesperocyparis arizonica (Arizona cypress).